Consider the following 546-residue polypeptide: Probable malate:quinone oxidoreductase (546 aa).

The protein belongs to the MQO family. The cofactor is FAD.

The enzyme catalyses (S)-malate + a quinone = a quinol + oxaloacetate. The protein operates within carbohydrate metabolism; tricarboxylic acid cycle; oxaloacetate from (S)-malate (quinone route): step 1/1. The protein is Probable malate:quinone oxidoreductase of Acinetobacter baumannii (strain ACICU).